Reading from the N-terminus, the 713-residue chain is Polyribonucleotide nucleotidyltransferase (713 aa).

Residues aspartate 494 and aspartate 500 each contribute to the Mg(2+) site. Residues 561 to 623 (PSFSTMTIPK…EAVQSAEKRV (63 aa)) form the KH domain. The 70-residue stretch at 633–702 (GDVYQGTVKS…KSGKYKLSRK (70 aa)) folds into the S1 motif domain.

The protein belongs to the polyribonucleotide nucleotidyltransferase family. Mg(2+) is required as a cofactor.

The protein resides in the cytoplasm. It catalyses the reaction RNA(n+1) + phosphate = RNA(n) + a ribonucleoside 5'-diphosphate. Involved in mRNA degradation. Catalyzes the phosphorolysis of single-stranded polyribonucleotides processively in the 3'- to 5'-direction. This chain is Polyribonucleotide nucleotidyltransferase, found in Amoebophilus asiaticus (strain 5a2).